We begin with the raw amino-acid sequence, 356 residues long: Chitin elicitor-binding protein (356 aa).

Positions 1-28 (MASLTAALATPAAAALLLLVLLAAPASA) are cleaved as a signal peptide. N-linked (GlcNAc...) asparagine glycosylation occurs at asparagine 30. Cystine bridges form between cysteine 33-cysteine 100, cysteine 41-cysteine 164, cysteine 98-cysteine 162, and cysteine 100-cysteine 164. Chitin is bound at residue 50–51 (PN). Residues asparagine 63 and asparagine 89 are each glycosylated (N-linked (GlcNAc...) asparagine). 2 LysM domains span residues 111–158 (PIYV…TLWI) and 175–219 (LAYS…ILDV). Residues 117 to 123 (PQDGLDA), asparagine 142, 145 to 152 (PDPNKINV), threonine 155, and glycine 182 each bind chitin. N-linked (GlcNAc...) asparagine glycosylation is present at asparagine 151. Asparagine 184 carries N-linked (GlcNAc...) asparagine glycosylation. Chitin contacts are provided by residues serine 186 and 211–213 (LQM). Disulfide bonds link cysteine 224/cysteine 257 and cysteine 252/cysteine 274. Residues asparagine 265, asparagine 281, asparagine 290, asparagine 306, and asparagine 319 are each glycosylated (N-linked (GlcNAc...) asparagine). Residues 336–356 (RSMWSMSVISFHMVLIIICFL) traverse the membrane as a helical segment.

Forms homooligomer. Interacts with CERK1. Binds to chitin oligosaccharide elicitor. Interacts with LYP4 and LYP6. In terms of processing, N-glycosylated. As to expression, expressed in seedlings, roots, shoots, stems and flowers.

The protein localises to the cell membrane. Its function is as follows. Chitin elicitor-binding protein involved in the perception and transduction of chitin oligosaccharide elicitor signal for defense responses. The polypeptide is Chitin elicitor-binding protein (Oryza sativa subsp. japonica (Rice)).